Reading from the N-terminus, the 198-residue chain is ATP-dependent Clp protease proteolytic subunit (198 aa).

Ser98 serves as the catalytic Nucleophile. Residue His123 is part of the active site.

This sequence belongs to the peptidase S14 family. In terms of assembly, fourteen ClpP subunits assemble into 2 heptameric rings which stack back to back to give a disk-like structure with a central cavity, resembling the structure of eukaryotic proteasomes.

It is found in the cytoplasm. It carries out the reaction Hydrolysis of proteins to small peptides in the presence of ATP and magnesium. alpha-casein is the usual test substrate. In the absence of ATP, only oligopeptides shorter than five residues are hydrolyzed (such as succinyl-Leu-Tyr-|-NHMec, and Leu-Tyr-Leu-|-Tyr-Trp, in which cleavage of the -Tyr-|-Leu- and -Tyr-|-Trp bonds also occurs).. Its function is as follows. Cleaves peptides in various proteins in a process that requires ATP hydrolysis. Has a chymotrypsin-like activity. Plays a major role in the degradation of misfolded proteins. The sequence is that of ATP-dependent Clp protease proteolytic subunit from Halothermothrix orenii (strain H 168 / OCM 544 / DSM 9562).